The chain runs to 158 residues: S-ribosylhomocysteine lyase (158 aa).

H56, H60, and C125 together coordinate Fe cation.

It belongs to the LuxS family. Homodimer. The cofactor is Fe cation.

It catalyses the reaction S-(5-deoxy-D-ribos-5-yl)-L-homocysteine = (S)-4,5-dihydroxypentane-2,3-dione + L-homocysteine. Involved in the synthesis of autoinducer 2 (AI-2) which is secreted by bacteria and is used to communicate both the cell density and the metabolic potential of the environment. The regulation of gene expression in response to changes in cell density is called quorum sensing. Catalyzes the transformation of S-ribosylhomocysteine (RHC) to homocysteine (HC) and 4,5-dihydroxy-2,3-pentadione (DPD). This is S-ribosylhomocysteine lyase from Leuconostoc citreum (strain KM20).